Here is a 345-residue protein sequence, read N- to C-terminus: Microtubule-associated protein Jupiter (345 aa).

The segment covering 1-14 (MISNFDCTDNQASS) has biased composition (polar residues). Residues 1–34 (MISNFDCTDNQASSKVLRPPGGGSSDIFGSEMPQ) form a disordered region. At Ser-24 the chain carries Phosphoserine. Thr-35 carries the phosphothreonine modification. Residues 78-87 (QKTVDSHNRL) are compositionally biased toward basic and acidic residues. The tract at residues 78–100 (QKTVDSHNRLFGEPTRPITPGKN) is disordered. Thr-92 and Thr-96 each carry phosphothreonine. Ser-105, Ser-134, and Ser-145 each carry phosphoserine. Disordered stretches follow at residues 127–241 (HYNG…QPHS) and 300–345 (EGNP…SGLW). Positions 132-145 (SGSVSSASSSVSSS) are enriched in low complexity. The segment covering 146-164 (TENLKMNSGSRSVFRNMST) has biased composition (polar residues). Pro residues predominate over residues 177–191 (LCPPSPVRIEPPTPP). Composition is skewed to polar residues over residues 212-226 (DNSTYTKSDQVNEAC) and 315-326 (DYNQRQESSNAG).

This sequence belongs to the MAP Jupiter family.

The protein localises to the nucleus. It localises to the cytoplasm. Its subcellular location is the cytoskeleton. It is found in the spindle. Binds to all microtubule populations. This is Microtubule-associated protein Jupiter from Drosophila erecta (Fruit fly).